The following is a 199-amino-acid chain: Adenylyl-sulfate kinase (199 aa).

34–41 contributes to the ATP binding site; the sequence is GLSGSGKS. Ser-108 acts as the Phosphoserine intermediate in catalysis.

This sequence belongs to the APS kinase family.

It catalyses the reaction adenosine 5'-phosphosulfate + ATP = 3'-phosphoadenylyl sulfate + ADP + H(+). It participates in sulfur metabolism; hydrogen sulfide biosynthesis; sulfite from sulfate: step 2/3. Functionally, catalyzes the synthesis of activated sulfate. This chain is Adenylyl-sulfate kinase, found in Oceanobacillus iheyensis (strain DSM 14371 / CIP 107618 / JCM 11309 / KCTC 3954 / HTE831).